We begin with the raw amino-acid sequence, 312 residues long: Pimeloyl-[acyl-carrier protein] methyl ester esterase (312 aa).

One can recognise an AB hydrolase-1 domain in the interval 17–241 (VYLIHGWGAN…KAAHAPFLSH (225 aa)). Substrate is bound by residues W23, 83–84 (SL), and 145–149 (FLQLQ). The Nucleophile role is filled by S83. Residues D207 and H235 contribute to the active site. H235 contributes to the substrate binding site.

Belongs to the AB hydrolase superfamily. Carboxylesterase BioH family. In terms of assembly, monomer.

It localises to the cytoplasm. The enzyme catalyses 6-carboxyhexanoyl-[ACP] methyl ester + H2O = 6-carboxyhexanoyl-[ACP] + methanol + H(+). The protein operates within cofactor biosynthesis; biotin biosynthesis. The physiological role of BioH is to remove the methyl group introduced by BioC when the pimeloyl moiety is complete. It allows to synthesize pimeloyl-ACP via the fatty acid synthetic pathway through the hydrolysis of the ester bonds of pimeloyl-ACP esters. This Neisseria meningitidis serogroup A / serotype 4A (strain DSM 15465 / Z2491) protein is Pimeloyl-[acyl-carrier protein] methyl ester esterase.